Reading from the N-terminus, the 237-residue chain is Phosphoserine phosphatase (237 aa).

D30 acts as the Nucleophile in catalysis. D30 and D32 together coordinate Mg(2+). Catalysis depends on D32, which acts as the Proton donor. Substrate-binding positions include E39, R76, 120–121 (SG), and K169. D192 lines the Mg(2+) pocket. N195 contacts substrate.

Belongs to the HAD-like hydrolase superfamily. SerB family. Mg(2+) serves as cofactor.

The catalysed reaction is O-phospho-L-serine + H2O = L-serine + phosphate. The enzyme catalyses O-phospho-D-serine + H2O = D-serine + phosphate. It participates in amino-acid biosynthesis; L-serine biosynthesis; L-serine from 3-phospho-D-glycerate: step 3/3. Functionally, catalyzes the dephosphorylation of phosphoserine (P-Ser) in vitro. Also catalyzes the dephosphorylation of phosphothreonine (P-Thr) in vitro. In Albidiferax ferrireducens (strain ATCC BAA-621 / DSM 15236 / T118) (Rhodoferax ferrireducens), this protein is Phosphoserine phosphatase.